The sequence spans 440 residues: MESQQLSQHSHISHGSACASVTSKEVHTNQDPLDVSASKTEECEKASTKANSQQTTTPASSAVPENPHHASPQTAQSHSPQNGPYPQQCMMTQNQANPSGWSFYGHPSMIPYTPYQMSPMYFPPGPQSQFPQYPSSVGTPLSTPSPESGNTFTDSSSADSDMTSTKKYVRPPPMLTSPNDFPNWVKTYIKFLQNSNLGGIIPTVNGKPVRQITDDELTFLYNTFQIFAPSQFLPTWVKDILSVDYTDIMKILSKSIEKMQSDTQEANDIVTLANLQYNGSTPADAFETKVTNIIDRLNNNGIHINNKVACQLIMRGLSGEYKFLRYTRHRHLNMTVAELFLDIHAIYEEQQGSRNSKPNYRRNLSDEKNDSRSYTNTTKPKVIARNPQKTNNSKSKTARAHNVSTSNNSPSTDNDSISKSTTEPIQLNNKHDLHLRPGTY.

Low complexity predominate over residues 1-16 (MESQQLSQHSHISHGS). Disordered regions lie at residues 1–93 (MESQ…MMTQ), 126–173 (PQSQ…RPPP), and 352–440 (GSRN…PGTY). Polar residues-rich tracts occupy residues 48–60 (TKAN…TPAS), 71–93 (SPQT…MMTQ), and 127–152 (QSQF…GNTF). Over residues 153–165 (TDSSSADSDMTST) the composition is skewed to low complexity. An RNA-binding region spans residues 299–401 (NNGIHINNKV…NSKSKTARAH (103 aa)). Low complexity predominate over residues 402 to 418 (NVSTSNNSPSTDNDSIS). The residue at position 416 (S416) is a Phosphoserine. The segment covering 419 to 428 (KSTTEPIQLN) has biased composition (polar residues). The segment covering 429-440 (NKHDLHLRPGTY) has biased composition (basic and acidic residues).

In terms of assembly, homotrimer.

It localises to the cytoplasm. Functionally, capsid protein (CA) is the structural component of the virus-like particle (VLP), forming the shell that encapsulates the retrotransposons dimeric RNA genome. The particles are assembled from trimer-clustered units and there are holes in the capsid shells that allow for the diffusion of macromolecules. CA also has nucleocapsid-like chaperone activity, promoting primer tRNA(i)-Met annealing to the multipartite primer-binding site (PBS), dimerization of Ty1 RNA and initiation of reverse transcription. This is Transposon Ty1-GR1 Gag polyprotein (TY1A-GR1) from Saccharomyces cerevisiae (strain ATCC 204508 / S288c) (Baker's yeast).